The chain runs to 55 residues: uncharacterized protein (55 aa).

This is an uncharacterized protein from Avena byzantina (Oat).